A 480-amino-acid polypeptide reads, in one-letter code: MGYSFDRASKDVVKKLQGRDLRPVECLSDATKFRLFHILQETPRSGWETEDIPVGFTLLDLLEPNFPVPEPEVSAPKPFIHVQSTDLEANLNVADIARGGVGYVGYGGYNIEVQSTSIPNPKLEILQNRKLLDKLPTFMKFCRMERKNLYVVTEAYEVSKDTMLTGLSSVNLLVKGFFKQLFKVRGKAGRSEKYSIPIPKGSVLAYKKQQLVIENNTCVILPSATKKKMTFPDRPLKLYDLPVTLRYQEEVIETGSWIDDIDPIGTIEEPANLNFMCLQHEVSEQTQLLAELSKDVQEVVFSSFLHMLSDRDVLYDLMKMLELNQLGHMDGPGGKILDELRKDSSTPHDVLKDLNLYLLQALLVLSDTQLCLLAQSVKMGLLPHQVELVKSILQTNFKYSSNTPFTLQPQLLAPLQGEGLAITYELLEECGLKMELNNPRSTWDLEAKMPLSALYGSLSFLQQLQKANSSSKPSLSPGYI.

The tract at residues 1–226 (MGYSFDRASK…TCVILPSATK (226 aa)) is triggers pyroptosis.

The protein belongs to the gasdermin family. Homooligomer; homooligomeric ring-shaped pore complex containing 27-28 subunits when inserted in the membrane. In terms of processing, cleavage by CASP8 relieves autoinhibition by releasing the N-terminal moiety (Gasdermin-C4, N-terminal) that initiates pyroptosis. Palmitoylated.

The protein resides in the cytoplasm. It is found in the cytosol. The protein localises to the cell membrane. With respect to regulation, the full-length protein before cleavage is inactive: intramolecular interactions between N- and C-terminal domains mediate autoinhibition in the absence of activation signal. The intrinsic pyroptosis-inducing activity is carried by the released N-terminal moiety (Gasdermin-C4, N-terminal) following cleavage by caspase CASP8. Its function is as follows. This form constitutes the precursor of the pore-forming protein: upon cleavage, the released N-terminal moiety (Gasdermin-C4, N-terminal) binds to membranes and forms pores, triggering pyroptosis. Functionally, pore-forming protein that causes membrane permeabilization and pyroptosis. Produced by the cleavage of gasdermin-C4 by caspase CASP8 in response to death signals. After cleavage, moves to the plasma membrane where it strongly binds to membrane inner leaflet lipids. Homooligomerizes within the membrane and forms pores of 10-15 nanometers (nm) of inner diameter, triggering pyroptosis. The polypeptide is Gasdermin-C4 (Mus musculus (Mouse)).